The primary structure comprises 770 residues: ARF GTPase-activating protein GIT1 (770 aa).

The region spanning 1 to 124 is the Arf-GAP domain; the sequence is MSRKGPRAEV…AFVHKLPCRD (124 aa). The segment at 1 to 124 is interaction with gamma-tubulin and localization to the centrosome; the sequence is MSRKGPRAEV…AFVHKLPCRD (124 aa). The segment at 11-34 adopts a C4-type zinc-finger fold; the sequence is CADCSAPDPGWASISRGVLVCDEC. ANK repeat units follow at residues 132–161, 166–195, and 199–228; these read DLSKQLHSSVRTGNLETCLRLLSLGAQANF, KGTTPLHVAAKAGQTLQAELLVVYGADPGS, and NGRTPIDYARQAGHHELAERLVECQYELTD. Residue Tyr-224 is modified to Phosphotyrosine. The tract at residues 245-374 is interaction with PCLO; the sequence is HYIIPQMADR…QGKSLSSPTD (130 aa). Positions 253-424 are interaction with PTK2/FAK1; that stretch reads DRSRQKCMSQ…NRARSMDSSD (172 aa). Positions 254-376 are interaction with ARHGEF7; the sequence is RSRQKCMSQS…KSLSSPTDNL (123 aa). Residues 363-425 are disordered; it reads RQQGKSLSSP…RARSMDSSDL (63 aa). Polar residues predominate over residues 366–383; the sequence is GKSLSSPTDNLELSARNQ. Residues Ser-368 and Ser-371 each carry the phosphoserine modification. Position 373 is a phosphothreonine (Thr-373). The interaction with NCK2 and GRIN3A stretch occupies residues 375–596; sequence NLELSARNQS…QEGSRHASKL (222 aa). Positions 375 to 596 are required for localization at synapses; it reads NLELSARNQS…QEGSRHASKL (222 aa). Phosphoserine is present on residues Ser-379 and Ser-384. Tyr-392 bears the Phosphotyrosine mark. A phosphoserine mark is found at Ser-394 and Ser-397. Positions 394-403 are enriched in acidic residues; the sequence is SVASDEDTDQ. Thr-401 is modified (phosphothreonine). Phosphoserine is present on residues Ser-419, Ser-422, and Ser-426. The interaction with MAPK1 stretch occupies residues 420–475; that stretch reads MDSSDLSDGAVTLQEYLELKKALATSEAKVQQLMKVNSSLSDELRKLQREIHKLQA. Positions 429–629 are interaction with IKBKG; it reads AVTLQEYLEL…EGKRFLELSK (201 aa). Residues 449 to 483 adopt a coiled-coil conformation; it reads VQQLMKVNSSLSDELRKLQREIHKLQAENLQLRQP. Phosphoserine occurs at positions 507 and 545. At Thr-546 the chain carries Phosphothreonine. Phosphotyrosine is present on residues Tyr-554 and Tyr-563. 4 positions are modified to phosphoserine: Ser-570, Ser-580, Ser-601, and Ser-605. Low complexity predominate over residues 574–586; it reads VTFTPSSPLLSSS. The disordered stretch occupies residues 574-615; that stretch reads VTFTPSSPLLSSSQEGSRHASKLSRHGSGAESDYENTQSGEP. Thr-610 bears the Phosphothreonine mark. Ser-639 is subject to Phosphoserine. The interval 646-770 is interaction with PXN and TGFB1I1; that stretch reads PGLPSTEDVI…VTITTREKKQ (125 aa).

Forms homodimers and possibly oligomers. May form heterooligomers with GIT2. Interacts with G protein-coupled receptor kinases, including GRK2, GRK3, GRK5 and GRK6. Interacts with PPFIA1, PPFIA2 and PPFIA4. Interacts with GRIP1 and forms a ternary complex with PPFIA1 and GRIP1. Directly interacts with ARHGEF7/beta-PIX, forming in vitro a heptameric complex made of a GIT1 dimer and an ARHGEF7 trimer. Directly interacts with PXN/paxillin; this interaction is enhanced in the presence of ARHGEF7. Directly interacts (via C-terminus) with TGFB1I1/Hic-5 (via LD motif 3). Directly interacts with PTK2/FAK1. May interact with PTK2B/PYK2; this interaction may be indirect. Interacts with AMPA receptors GRIA2/3. Directly interacts with protein Piccolo/PCLO. Forms a complex with Ephrin-B1/EFNB1 and NCK2/GRB4 (via SH2); this interaction is important for spine morphogenesis and synapse formation. Interaction with NCK2 is transient and depends upon GIT1 phosphorylation at Tyr-392. Interacts with GRIN3A/GluN3A (via C-terminus); this interaction competes with GIT1 interaction with ARHGEF7 and limits synaptic localization of GIT1. Interacts with IKBKG/NEMO in resting bone mesenchymal stem cells, as well as in TNF-stimulated cells; this interaction may increase IKBKG affinity for 'Lys-63'-linked polyubiquitin chains. Interacts with GABA(A) receptors, including GABRB3 and GABRG2. Interacts with SCRIB. Interacts (via N- and C-terminus) with ENTR1/SDCCAG3 (via N-terminus); this interaction is direct. May form a tripartite complex with ENTR1 and PTPN13. Interacts with YWHAZ. Interacts with PAK1 and PAK3. Directly interacts (via N-terminus) with gamma-tubulin. Interacts with MAPK1 and MAPK3; this interaction is required for MAPK1/3 recruitment to focal adhesions. In terms of processing, phosphorylated on tyrosine residues by PTK2/FAK1 and SRC in growing fibroblasts. Phosphorylation at Tyr-392 is induced by activation of Ephrin-B1/EFNB1 and catalyzed by SRC family kinases. It is required for the interaction with NCK2 and for GIT1 recruitment to synapses in hippocampal neurons. As to expression, widely expressed. Expressed at high levels in testis (at protein level). Expressed in the brain, including in CA1 hippocampal neurons, in the amygdala, and thalamic nuclei (at protein level).

Its subcellular location is the cytoplasm. It localises to the synapse. The protein localises to the presynapse. The protein resides in the postsynapse. It is found in the postsynaptic density. Its subcellular location is the cell junction. It localises to the focal adhesion. The protein localises to the cell projection. The protein resides in the lamellipodium. It is found in the cytoskeleton. Its subcellular location is the microtubule organizing center. It localises to the centrosome. The protein localises to the spindle pole. Its function is as follows. GTPase-activating protein for ADP ribosylation factor family members, including ARF1. Multidomain scaffold protein that interacts with numerous proteins and therefore participates in many cellular functions, including receptor internalization, focal adhesion remodeling, and signaling by both G protein-coupled receptors and tyrosine kinase receptors. Through PAK1 activation, positively regulates microtubule nucleation during interphase. Plays a role in the regulation of cytokinesis; for this function, may act in a pathway also involving ENTR1 and PTPN13. May promote cell motility both by regulating focal complex dynamics and by the activation of RAC1. May act as scaffold for MAPK1/3 signal transduction, recruiting MAPK1/3 to focal adhesions after EGF stimulation via a Src-dependent pathway, hence stimulating cell migration. Plays a role in brain development and function. Involved in the regulation of spine density and synaptic plasticity that is required for processes involved in learning. Plays an important role in dendritic spine morphogenesis and synapse formation. In hippocampal neurons, recruits guanine nucleotide exchange factors (GEFs), such as ARHGEF7/beta-PIX, to the synaptic membrane. These in turn locally activate RAC1, which is an essential step for spine morphogenesis and synapse formation. May contribute to the organization of presynaptic active zones through oligomerization and formation of a Piccolo/PCLO-based protein network, which includes ARHGEF7/beta-PIX and FAK1. In neurons, through its interaction with liprin-alpha family members, may be required for AMPA receptor (GRIA2/3) proper targeting to the cell membrane. In complex with GABA(A) receptors and ARHGEF7, plays a crucial role in regulating GABA(A) receptor synaptic stability, maintaining GPHN/gephyrin scaffolds and hence GABAergic inhibitory synaptic transmission, by locally coordinating RAC1 and PAK1 downstream effector activity, leading to F-actin stabilization. May also be important for RAC1 downstream signaling pathway through PAK3 and regulation of neuronal inhibitory transmission at presynaptic input. Required for successful bone regeneration during fracture healing. The function in intramembranous ossification may, at least partly, exerted by macrophages in which GIT1 is a key negative regulator of redox homeostasis, IL1B production, and glycolysis, acting through the ERK1/2/NRF2/NFE2L2 axis. May also play a role in angiogenesis during fracture healing. In this process, may regulate activation of the canonical NF-kappa-B signal in bone mesenchymal stem cells by enhancing the interaction between NEMO and 'Lys-63'-ubiquitinated RIPK1/RIP1, eventually leading to enhanced production of VEGFA and others angiogenic factors. Essential for VEGF signaling through the activation of phospholipase C-gamma and ERK1/2, hence may control endothelial cell proliferation and angiogenesis. This is ARF GTPase-activating protein GIT1 from Rattus norvegicus (Rat).